A 277-amino-acid polypeptide reads, in one-letter code: Energy-coupling factor transporter ATP-binding protein EcfA1 (277 aa).

The ABC transporter domain maps to 5–240 (LEVENLVFKY…SEDMVEIGLD (236 aa)). 40-47 (GQNGSGKS) contacts ATP.

Belongs to the ABC transporter superfamily. Energy-coupling factor EcfA family. Forms a stable energy-coupling factor (ECF) transporter complex composed of 2 membrane-embedded substrate-binding proteins (S component), 2 ATP-binding proteins (A component) and 2 transmembrane proteins (T component).

The protein resides in the cell membrane. Its function is as follows. ATP-binding (A) component of a common energy-coupling factor (ECF) ABC-transporter complex. Unlike classic ABC transporters this ECF transporter provides the energy necessary to transport a number of different substrates. The chain is Energy-coupling factor transporter ATP-binding protein EcfA1 from Lactococcus lactis subsp. lactis (strain IL1403) (Streptococcus lactis).